The following is a 135-amino-acid chain: Holo-[acyl-carrier-protein] synthase (135 aa).

Positions 7 and 57 each coordinate Mg(2+).

The protein belongs to the P-Pant transferase superfamily. AcpS family. The cofactor is Mg(2+).

Its subcellular location is the cytoplasm. It carries out the reaction apo-[ACP] + CoA = holo-[ACP] + adenosine 3',5'-bisphosphate + H(+). Transfers the 4'-phosphopantetheine moiety from coenzyme A to a Ser of acyl-carrier-protein. The chain is Holo-[acyl-carrier-protein] synthase from Corynebacterium glutamicum (strain R).